Reading from the N-terminus, the 665-residue chain is GRB2-associated-binding protein 2 (665 aa).

Serine 2 is subject to Phosphoserine. The region spanning 8 to 119 is the PH domain; it reads DVVCTGWLRK…WVQSICQICG (112 aa). The disordered stretch occupies residues 131-183; sequence RNLSSASHGPRSSPAEFSSSQHLLRERKSSAPSHSSQPTLFTFEPPMTSHMQP. A phosphoserine mark is found at serine 135, serine 142, serine 143, serine 149, serine 150, serine 160, serine 165, serine 211, serine 220, and serine 261. Over residues 160-170 the composition is skewed to polar residues; sequence SAPSHSSQPTL. Position 262 is a phosphothreonine (threonine 262). Tyrosine 263 bears the Phosphotyrosine mark. At threonine 275 the chain carries Phosphothreonine. Phosphoserine occurs at positions 278 and 282. At threonine 284 the chain carries Phosphothreonine. A Phosphotyrosine modification is found at tyrosine 290. Position 328 is a phosphothreonine (threonine 328). Disordered regions lie at residues 340 to 442 and 491 to 517; these read TSGD…ENYV and PSRGSEIQPPPVNRNLKPDRKAKPTPL. The SH3-binding motif lies at 348-355; sequence PPPRPPKP. Serine 365 is subject to Phosphoserine. Threonine 382 and threonine 388 each carry phosphothreonine. The residue at position 402 (serine 402) is a Phosphoserine. Threonine 405 is modified (phosphothreonine). Residues 412 to 423 show a composition bias toward low complexity; the sequence is GSGESASWSAES. Residues serine 420 and serine 423 each carry the phosphoserine modification. A Phosphotyrosine modification is found at tyrosine 441. The SH3-binding signature appears at 499 to 508; the sequence is PPPVNRNLKP. Serine 532 bears the Phosphoserine mark. Composition is skewed to polar residues over residues 548–566 and 578–600; these read SSSQYCRPISTQSITSTDS and NPVSASPVPSGTNSPAPRKSTGS. Positions 548–631 are disordered; that stretch reads SSSQYCRPIS…SSVTSDEKVD (84 aa). Serine 612 bears the Phosphoserine mark. The residue at position 632 (tyrosine 632) is a Phosphotyrosine. The segment covering 646-659 has biased composition (polar residues); the sequence is TMQEWTDVRQSSEP. A disordered region spans residues 646–665; sequence TMQEWTDVRQSSEPSKGAKL.

The protein belongs to the GAB family. As to quaternary structure, part of a complex composed of EEIG1, TNFRSF11A/RANK, PLCG2, GAB2, TEC and BTK; complex formation increases in the presence of TNFSF11/RANKL. Interacts with HCK. Interacts with SHC1; may mediate interaction with receptors. Interacts with SYK. Interacts with PI-3 kinase. Interacts with GRB2 (via SH3 2 domain). Interacts (phosphorylated) with PTPN11. Interacts with TNFRSF11A (via cytoplasmic domain). Interacts (phosphorylated) with 14-3-3 family proteins SFN, YWHAB, YWHAE, YWHAG, YWHAH, YWHAQ and YWHAZ; prevents interaction with GRB2 and attenuates GAB2 signaling. Phosphorylated upon EGF stimulation. Phosphorylated on tyrosine residues by HCK upon IL6 signaling. Phosphorylated on tyrosine residue(s) by the thrombopoietin receptor (TPOR), stem cell factor receptor (SCFR), and T-cell and B-cell antigen receptors, gp130, IL-2R and IL-3R. Phosphorylated upon stimulation of TNFRSF11A/RANK by TNFSF11/RANKL. In terms of processing, dephosphorylated by PTPN11.

The protein localises to the cytoplasm. The protein resides in the cell membrane. It is found in the membrane raft. In terms of biological role, adapter protein which acts downstream of several membrane receptors including cytokine, antigen, hormone, cell matrix and growth factor receptors to regulate multiple signaling pathways. Regulates osteoclast differentiation mediating the TNFRSF11A/RANK signaling. In allergic response, it plays a role in mast cells activation and degranulation through PI-3-kinase regulation. Also involved in the regulation of cell proliferation and hematopoiesis. This chain is GRB2-associated-binding protein 2 (Gab2), found in Rattus norvegicus (Rat).